The primary structure comprises 266 residues: Electron transfer flavoprotein subunit beta (266 aa).

Belongs to the ETF beta-subunit/FixA family. In terms of assembly, heterodimer of an alpha and a beta subunit. The cofactor is FAD. It depends on AMP as a cofactor.

The electron transfer flavoprotein serves as a specific electron acceptor for other dehydrogenases. It transfers the electrons to the main respiratory chain via ETF-ubiquinone oxidoreductase (ETF dehydrogenase). This chain is Electron transfer flavoprotein subunit beta (etfB), found in Mycobacterium leprae (strain TN).